The following is a 398-amino-acid chain: Phosphoglycerate kinase (398 aa).

Substrate-binding positions include 21 to 23 (DIN), R36, 59 to 62 (HFGR), R118, and R151. Residues K201, E323, and 353-356 (GGDT) each bind ATP.

Belongs to the phosphoglycerate kinase family. As to quaternary structure, monomer.

The protein localises to the cytoplasm. It catalyses the reaction (2R)-3-phosphoglycerate + ATP = (2R)-3-phospho-glyceroyl phosphate + ADP. Its pathway is carbohydrate degradation; glycolysis; pyruvate from D-glyceraldehyde 3-phosphate: step 2/5. The polypeptide is Phosphoglycerate kinase (Ruegeria pomeroyi (strain ATCC 700808 / DSM 15171 / DSS-3) (Silicibacter pomeroyi)).